We begin with the raw amino-acid sequence, 464 residues long: 3-isopropylmalate dehydratase large subunit (464 aa).

Residues C345, C405, and C408 each contribute to the [4Fe-4S] cluster site.

The protein belongs to the aconitase/IPM isomerase family. LeuC type 1 subfamily. Heterodimer of LeuC and LeuD. The cofactor is [4Fe-4S] cluster.

It catalyses the reaction (2R,3S)-3-isopropylmalate = (2S)-2-isopropylmalate. The protein operates within amino-acid biosynthesis; L-leucine biosynthesis; L-leucine from 3-methyl-2-oxobutanoate: step 2/4. In terms of biological role, catalyzes the isomerization between 2-isopropylmalate and 3-isopropylmalate, via the formation of 2-isopropylmaleate. This chain is 3-isopropylmalate dehydratase large subunit, found in Bacteroides fragilis (strain ATCC 25285 / DSM 2151 / CCUG 4856 / JCM 11019 / LMG 10263 / NCTC 9343 / Onslow / VPI 2553 / EN-2).